We begin with the raw amino-acid sequence, 372 residues long: MADS-box transcription factor pvg4 (372 aa).

The 61-residue stretch at 1-61 (MGRKKISIAP…GRLHVFCSSD (61 aa)) folds into the MADS-box domain. The interval 81 to 187 (SHFSSSPVEE…HPPHPHFHNN (107 aa)) is disordered. A compositionally biased stretch (low complexity) spans 84 to 100 (SSSPVEESSTVSPETTT). A compositionally biased stretch (polar residues) spans 114-145 (QDQPLSDSQLDTGDSPATSETTVQDYNPQVQS). Basic residues predominate over residues 167 to 184 (QHHHPHTRPPHHPPHPHF).

Its subcellular location is the nucleus. Functionally, acts in transcription regulation. May bind to a MEF2-like typee II promoter sequence. The chain is MADS-box transcription factor pvg4 (pvg4) from Schizosaccharomyces pombe (strain 972 / ATCC 24843) (Fission yeast).